We begin with the raw amino-acid sequence, 108 residues long: Thioredoxin (108 aa).

Residues 2 to 108 (SEHIVNVTDA…QLAAFLDANI (107 aa)) enclose the Thioredoxin domain. A disulfide bridge links cysteine 33 with cysteine 36.

This sequence belongs to the thioredoxin family.

Its function is as follows. Participates in various redox reactions through the reversible oxidation of its active center dithiol to a disulfide and catalyzes dithiol-disulfide exchange reactions. This Pseudomonas aeruginosa (strain ATCC 15692 / DSM 22644 / CIP 104116 / JCM 14847 / LMG 12228 / 1C / PRS 101 / PAO1) protein is Thioredoxin (trxA).